Consider the following 559-residue polypeptide: Potassium-transporting ATPase potassium-binding subunit (559 aa).

13 consecutive transmembrane segments (helical) span residues 5-25 (GFLL…PLGS), 27-47 (LARL…RILW), 63-83 (LLAL…LLFW), 132-152 (GLTV…FALI), 170-190 (LVRI…LFFI), 253-273 (LAQM…FGEA), 283-303 (LLWA…WAEV), 327-347 (FGVL…CGAV), 356-376 (ALGG…FGGV), 379-399 (GLYG…LMIG), 416-436 (MTAL…ALAM), 484-504 (LLAF…MAIA), and 524-544 (GALF…LTFI).

The protein belongs to the KdpA family. The system is composed of three essential subunits: KdpA, KdpB and KdpC.

It localises to the cell inner membrane. In terms of biological role, part of the high-affinity ATP-driven potassium transport (or Kdp) system, which catalyzes the hydrolysis of ATP coupled with the electrogenic transport of potassium into the cytoplasm. This subunit binds the periplasmic potassium ions and delivers the ions to the membrane domain of KdpB through an intramembrane tunnel. The protein is Potassium-transporting ATPase potassium-binding subunit of Salmonella enteritidis PT4 (strain P125109).